A 462-amino-acid chain; its full sequence is Keratin, type I cytoskeletal 28 (462 aa).

Positions 1 to 26 (MSLRFSGGSRHVGIQSGSLRPPSGGA) are disordered. Residues 1 to 83 (MSLRFSGGSR…GSEGGLLSGN (83 aa)) form a head region. The interval 84 to 119 (EKVTMQNLNNRLASYLDNVKALEEANSELERKIKTW) is coil 1A. The IF rod domain maps to 84 to 399 (EKVTMQNLNN…RLIDGDENSC (316 aa)). The linker 1 stretch occupies residues 120 to 141 (HEKYGPGSCRGLDRDYSKYHLT). The tract at residues 142–233 (IEDLKSKIIS…KNHEEEMKVL (92 aa)) is coil 1B. The tract at residues 234 to 256 (QCAAGGNVNVEMNAAPGVDLTVL) is linker 12. A coil 2 region spans residues 257–395 (LNNMRAEYEA…ETYCRLIDGD (139 aa)). The segment at 396 to 462 (ENSCSVSKGF…NGKAEQRVPF (67 aa)) is tail.

This sequence belongs to the intermediate filament family. As to quaternary structure, heterotetramer of two type I and two type II keratins. In the hair follicle and bulb, uniformly expressed in all three layers of the inner root sheath (the Henle layer, the Huxley layer and the cuticle) and observed in matrix cells (at protein level).

It localises to the cytoplasm. In terms of biological role, essential for the proper assembly of types I and II keratin protein complexes and the formation of keratin intermediate filaments in the inner root sheath (irs). The chain is Keratin, type I cytoskeletal 28 from Mus musculus (Mouse).